The following is a 188-amino-acid chain: Cytochrome b561 homolog 2 (188 aa).

Residues 1-15 (MSFTNTPERYGVISA) are Cytoplasmic-facing. A helical membrane pass occupies residues 16-36 (AFHWLSAIIVYGMFALGLWMV). Heme b is bound by residues His-18 and His-52. Topologically, residues 37-54 (TLSYYDGWYHKAPELHKS) are periplasmic. Residues 55-75 (IGILLMMGLVIRVLWRVISPP) form a helical membrane-spanning segment. Topologically, residues 76–91 (PGPLPSYSPMTRLAAR) are cytoplasmic. A helical transmembrane segment spans residues 92-112 (AGHLALYLLLFAIGISGYLIS). At 113–143 (TADGKPISVFGWFDVPATLADAGAQADFAGA) the chain is on the periplasmic side. A helical membrane pass occupies residues 144–164 (LHFWLAWSVVVLSVMHGFMAL). Residues His-145 and His-159 each contribute to the heme b site. The Cytoplasmic segment spans residues 165–188 (KHHFIDKDDTLKRMLGKSSSDYGV).

The protein belongs to the cytochrome b561 family. Heme b serves as cofactor.

Its subcellular location is the cell inner membrane. The polypeptide is Cytochrome b561 homolog 2 (yceJ) (Escherichia coli (strain K12)).